We begin with the raw amino-acid sequence, 354 residues long: Hyaluronan and proteoglycan link protein 1 (354 aa).

Positions 1–15 (MKSLLLLVLISFCWA) are excised as a propeptide. N-linked (GlcNAc...) asparagine glycosylation is found at N21 and N56. The Ig-like V-type domain occupies 38-152 (PRLLVEAEQA…EGLEDDTAVV (115 aa)). 5 cysteine pairs are disulfide-bonded: C61–C139, C181–C252, C205–C226, C279–C349, and C304–C325. 2 Link domains span residues 159-254 (VVFP…FCFT) and 259-351 (GRFY…YCFR).

This sequence belongs to the HAPLN family.

It is found in the secreted. Its subcellular location is the extracellular space. It localises to the extracellular matrix. Its function is as follows. Stabilizes the aggregates of proteoglycan monomers with hyaluronic acid in the extracellular cartilage matrix. In Bos taurus (Bovine), this protein is Hyaluronan and proteoglycan link protein 1 (HAPLN1).